Reading from the N-terminus, the 521-residue chain is GMP synthase [glutamine-hydrolyzing] (521 aa).

The 193-residue stretch at 5-197 (KILILDFGSQ…VLDICGAQPS (193 aa)) folds into the Glutamine amidotransferase type-1 domain. Catalysis depends on cysteine 81, which acts as the Nucleophile. Catalysis depends on residues histidine 171 and glutamate 173. The 193-residue stretch at 198–390 (WTMPNYIEEA…LGLPREMVYR (193 aa)) folds into the GMPS ATP-PPase domain. 225–231 (SGGVDSS) lines the ATP pocket.

Homodimer.

The catalysed reaction is XMP + L-glutamine + ATP + H2O = GMP + L-glutamate + AMP + diphosphate + 2 H(+). The protein operates within purine metabolism; GMP biosynthesis; GMP from XMP (L-Gln route): step 1/1. Functionally, catalyzes the synthesis of GMP from XMP. The protein is GMP synthase [glutamine-hydrolyzing] of Neisseria meningitidis serogroup C / serotype 2a (strain ATCC 700532 / DSM 15464 / FAM18).